The sequence spans 267 residues: L-aspartate dehydrogenase (267 aa).

NAD(+) is bound by residues Ala-124 and Asn-190. Residue His-218 is part of the active site.

Belongs to the L-aspartate dehydrogenase family.

It carries out the reaction L-aspartate + NADP(+) + H2O = oxaloacetate + NH4(+) + NADPH + H(+). The enzyme catalyses L-aspartate + NAD(+) + H2O = oxaloacetate + NH4(+) + NADH + H(+). It functions in the pathway cofactor biosynthesis; NAD(+) biosynthesis; iminoaspartate from L-aspartate (dehydrogenase route): step 1/1. Specifically catalyzes the NAD or NADP-dependent dehydrogenation of L-aspartate to iminoaspartate. The sequence is that of L-aspartate dehydrogenase from Methanococcus maripaludis (strain C6 / ATCC BAA-1332).